Consider the following 269-residue polypeptide: uncharacterized protein (269 aa).

The next 5 membrane-spanning stretches (helical) occupy residues 65–85 (FSLF…LFVM), 156–176 (VTSV…ISMV), 182–202 (YTRI…WLGF), 206–226 (MMSF…NDFW), and 242–262 (TLSA…EFSF). Positions 266–269 (KKKW) match the Di-lysine motif motif.

It belongs to the SURF4 family.

It localises to the membrane. This is an uncharacterized protein from Caenorhabditis elegans.